The sequence spans 152 residues: MKAICIVAGEASGRIYFKQGAPDEPVSITGYLLNLPRGLHGFHVHEFGDTSNGCTSAGEHFNPTRQRHGAPDAAERHVGDLGNVRSAGCTALTAIHMSDNVITLFGPLSILGRSLVVHTDRDDLGLGEHPLSKTTGNSGGRLGCGIIGVCAN.

H43, H45, and H60 together coordinate Cu cation. A disulfide bridge connects residues C54 and C144. Residues H60, H68, H77, and D80 each contribute to the Zn(2+) site. H118 contributes to the Cu cation binding site.

Belongs to the Cu-Zn superoxide dismutase family. Cu cation serves as cofactor. The cofactor is Zn(2+).

It carries out the reaction 2 superoxide + 2 H(+) = H2O2 + O2. Its function is as follows. Destroys radicals which are normally produced within the cells and which are toxic to biological systems. In Orgyia pseudotsugata (Douglas-fir tussock moth), this protein is Putative superoxide dismutase [Cu-Zn] (SOD).